Here is a 165-residue protein sequence, read N- to C-terminus: Crossover junction endodeoxyribonuclease RuvC (165 aa).

Residues Asp7, Glu68, and His142 contribute to the active site. The Mg(2+) site is built by Asp7, Glu68, and His142.

This sequence belongs to the RuvC family. In terms of assembly, homodimer which binds Holliday junction (HJ) DNA. The HJ becomes 2-fold symmetrical on binding to RuvC with unstacked arms; it has a different conformation from HJ DNA in complex with RuvA. In the full resolvosome a probable DNA-RuvA(4)-RuvB(12)-RuvC(2) complex forms which resolves the HJ. The cofactor is Mg(2+).

It localises to the cytoplasm. It catalyses the reaction Endonucleolytic cleavage at a junction such as a reciprocal single-stranded crossover between two homologous DNA duplexes (Holliday junction).. The RuvA-RuvB-RuvC complex processes Holliday junction (HJ) DNA during genetic recombination and DNA repair. Endonuclease that resolves HJ intermediates. Cleaves cruciform DNA by making single-stranded nicks across the HJ at symmetrical positions within the homologous arms, yielding a 5'-phosphate and a 3'-hydroxyl group; requires a central core of homology in the junction. The consensus cleavage sequence is 5'-(A/T)TT(C/G)-3'. Cleavage occurs on the 3'-side of the TT dinucleotide at the point of strand exchange. HJ branch migration catalyzed by RuvA-RuvB allows RuvC to scan DNA until it finds its consensus sequence, where it cleaves and resolves the cruciform DNA. The protein is Crossover junction endodeoxyribonuclease RuvC of Anaplasma marginale (strain Florida).